The primary structure comprises 139 residues: D-ribose pyranase (139 aa).

The active-site Proton donor is H20. Substrate-binding positions include D28, H106, and 128–130 (YAN).

This sequence belongs to the RbsD / FucU family. RbsD subfamily. As to quaternary structure, homodecamer.

It is found in the cytoplasm. It catalyses the reaction beta-D-ribopyranose = beta-D-ribofuranose. It functions in the pathway carbohydrate metabolism; D-ribose degradation; D-ribose 5-phosphate from beta-D-ribopyranose: step 1/2. Its function is as follows. Catalyzes the interconversion of beta-pyran and beta-furan forms of D-ribose. This chain is D-ribose pyranase, found in Shewanella pealeana (strain ATCC 700345 / ANG-SQ1).